We begin with the raw amino-acid sequence, 49 residues long: Large ribosomal subunit protein bL33B (49 aa).

The protein belongs to the bacterial ribosomal protein bL33 family.

This chain is Large ribosomal subunit protein bL33B (rpmG2), found in Lactococcus lactis subsp. lactis (strain IL1403) (Streptococcus lactis).